A 439-amino-acid chain; its full sequence is Acyl-coenzyme A thioesterase 10, mitochondrial (439 aa).

A mitochondrion-targeting transit peptide spans 1–21 (MKRAAMRLWTLNKGLLTHGRG). HotDog ACOT-type domains are found at residues 85-209 (SYIE…QDSE) and 289-401 (EDTK…EKEV).

Belongs to the acyl coenzyme A hydrolase family.

Its subcellular location is the mitochondrion. In terms of biological role, catalyzes the hydrolysis of acyl-CoAs into free fatty acids and coenzyme A (CoASH), regulating their respective intracellular levels. Active on long chain acyl-CoAs. In Mus musculus (Mouse), this protein is Acyl-coenzyme A thioesterase 10, mitochondrial.